Consider the following 139-residue polypeptide: MTTQPSKQLETFENPIQTRDYRIHMEIPEFTCLCPKTGQPDFARLTLDYIPDKKCIELKSLKLYIWSYRNEGTFHEAVTNQILDDLVIAMKPRFIRLTSKFYVRGGIFTNVVAEHRKKGWHPQPPVFLESFDEQFNTRS.

Catalysis depends on Cys-34, which acts as the Thioimide intermediate. Asp-41 serves as the catalytic Proton donor. Substrate is bound by residues 56 to 58 (IEL) and 75 to 76 (HE).

The protein belongs to the GTP cyclohydrolase I family. QueF type 1 subfamily.

Its subcellular location is the cytoplasm. The enzyme catalyses 7-aminomethyl-7-carbaguanine + 2 NADP(+) = 7-cyano-7-deazaguanine + 2 NADPH + 3 H(+). It functions in the pathway tRNA modification; tRNA-queuosine biosynthesis. Catalyzes the NADPH-dependent reduction of 7-cyano-7-deazaguanine (preQ0) to 7-aminomethyl-7-deazaguanine (preQ1). This is NADPH-dependent 7-cyano-7-deazaguanine reductase from Nitrosomonas eutropha (strain DSM 101675 / C91 / Nm57).